The primary structure comprises 799 residues: Elongation factor G, mitochondrial (799 aa).

The N-terminal 33 residues, 1–33, are a transit peptide targeting the mitochondrion; that stretch reads MRSPSLARLQTRAVFGLTRSARFQPQTLLRQRC. Residues 97-384 enclose the tr-type G domain; it reads DKCRNIGIAA…GVIDYLPNPA (288 aa). GTP contacts are provided by residues 106–113, 182–186, and 236–239; these read AHIDSGKT, DTPGH, and NKMD.

It belongs to the TRAFAC class translation factor GTPase superfamily. Classic translation factor GTPase family. EF-G/EF-2 subfamily.

It localises to the mitochondrion. It participates in protein biosynthesis; polypeptide chain elongation. Mitochondrial GTPase that catalyzes the GTP-dependent ribosomal translocation step during translation elongation. During this step, the ribosome changes from the pre-translocational (PRE) to the post-translocational (POST) state as the newly formed A-site-bound peptidyl-tRNA and P-site-bound deacylated tRNA move to the P and E sites, respectively. Catalyzes the coordinated movement of the two tRNA molecules, the mRNA and conformational changes in the ribosome. The sequence is that of Elongation factor G, mitochondrial (mef1) from Penicillium rubens (strain ATCC 28089 / DSM 1075 / NRRL 1951 / Wisconsin 54-1255) (Penicillium chrysogenum).